Consider the following 432-residue polypeptide: Elongation factor 1-gamma (432 aa).

The 82-residue stretch at 1-82 (LYTYPENWRA…YVSNEELRGS (82 aa)) folds into the GST N-terminal domain. Residues 83-211 (TPEAAAQVVQ…VKLCEKMAQF (129 aa)) form the GST C-terminal domain. N6-acetyllysine is present on residues K142 and K207. Basic and acidic residues predominate over residues 216–249 (FAESQPKKDTPRKEKGSREEKQKPQAERKEEKKA). Residues 216–258 (FAESQPKKDTPRKEKGSREEKQKPQAERKEEKKAAAPAPEEEL) are disordered. Residue K248 forms a Glycyl lysine isopeptide (Lys-Gly) (interchain with G-Cter in SUMO1) linkage. Positions 271-432 (AKDPFAHLPK…KAFNQGKIFK (162 aa)) constitute an EF-1-gamma C-terminal domain. K280 is covalently cross-linked (Glycyl lysine isopeptide (Lys-Gly) (interchain with G-Cter in SUMO2)). At K396 the chain carries N6-acetyllysine. K429 bears the N6-acetyllysine; alternate mark. N6-malonyllysine; alternate is present on K429.

As to quaternary structure, EF-1 is composed of four subunits: alpha, beta, delta, and gamma.

Probably plays a role in anchoring the complex to other cellular components. This is Elongation factor 1-gamma (EEF1G) from Sus scrofa (Pig).